A 191-amino-acid polypeptide reads, in one-letter code: Pentapeptide repeat protein MfpA (191 aa).

The Pentapeptide repeat domain occupies Cys-115–Gly-154.

This sequence belongs to the pentapeptide repeat protein family. As to quaternary structure, homodimer. Probably interacts with DNA gyrase.

In terms of biological role, when present on multicopy plasmids confers increased resistance to fluoroquinolone antibiotics such as ciprofloxacin and sparfloxacin but not the quinolone nalidixic acid. Forms a structure that exhibits size, shape and electrostatic similarity to B-form DNA; it may bind to DNA gyrase which is postulated to protect it from fluoroquinolones. This chain is Pentapeptide repeat protein MfpA, found in Mycolicibacterium smegmatis (strain ATCC 700084 / mc(2)155) (Mycobacterium smegmatis).